We begin with the raw amino-acid sequence, 238 residues long: Uridylate kinase (238 aa).

12 to 15 contributes to the ATP binding site; that stretch reads KLSG. The tract at residues 20-25 is involved in allosteric activation by GTP; the sequence is GDEGFG. Gly54 contributes to the UMP binding site. ATP-binding residues include Gly55 and Arg59. Residues Asp74 and 135-142 each bind UMP; that span reads TGSPFFTT. Thr162, Tyr168, and Asp171 together coordinate ATP.

It belongs to the UMP kinase family. As to quaternary structure, homohexamer.

It is found in the cytoplasm. It catalyses the reaction UMP + ATP = UDP + ADP. It participates in pyrimidine metabolism; CTP biosynthesis via de novo pathway; UDP from UMP (UMPK route): step 1/1. With respect to regulation, allosterically activated by GTP. Inhibited by UTP. Catalyzes the reversible phosphorylation of UMP to UDP. The polypeptide is Uridylate kinase (Histophilus somni (strain 129Pt) (Haemophilus somnus)).